A 766-amino-acid chain; its full sequence is Serine/threonine-protein kinase PLK4 (766 aa).

The Protein kinase domain maps to 14 to 267 (YEVQHLLGKG…LEAVLCHPFM (254 aa)). ATP contacts are provided by residues 20–28 (LGKGGFAIV) and Lys43. The Proton acceptor role is filled by Asp138. A Cryptic POLO box 1 (CPB1) domain is found at 379–496 (EDRISVPPLN…ARFVGLVKSK (118 aa)). The 104-residue stretch at 497 to 600 (TPKVTYFSTL…GRRPVTDVQP (104 aa)) folds into the Cryptic POLO box 2 (CPB2) domain. Positions 658–737 (PIKRINVPDV…IPNIQIKLKT (80 aa)) constitute a POLO box domain.

This sequence belongs to the protein kinase superfamily. Ser/Thr protein kinase family. CDC5/Polo subfamily. In terms of assembly, homodimer. Ubiquitinated by the SCF(Slimb) ubiquitin ligase complex; leading to its degradation by the proteasome during interphase and regulating centriole number and ensuring the block to centriole reduplication.

It is found in the cytoplasm. The protein resides in the cytoskeleton. Its subcellular location is the microtubule organizing center. It localises to the centrosome. The protein localises to the centriole. It catalyses the reaction L-seryl-[protein] + ATP = O-phospho-L-seryl-[protein] + ADP + H(+). The enzyme catalyses L-threonyl-[protein] + ATP = O-phospho-L-threonyl-[protein] + ADP + H(+). Serine/threonine-protein kinase that plays a central role in centriole duplication. Able to trigger procentriole formation on the surface of the mother centriole cylinder, using mother centriole as a platform, leading to the recruitment of centriole biogenesis proteins such as sas-6. When overexpressed, it is able to induce centrosome amplification through the simultaneous generation of multiple procentrioles adjoining each parental centriole during S phase. Centrosome amplification following overexpression can initiate tumorigenesis, highlighting the importance of centrosome regulation in cancers. This Drosophila yakuba (Fruit fly) protein is Serine/threonine-protein kinase PLK4 (SAK).